A 382-amino-acid polypeptide reads, in one-letter code: Anhydro-N-acetylmuramic acid kinase (382 aa).

22–29 is a binding site for ATP; it reads GTSMDGVD.

The protein belongs to the anhydro-N-acetylmuramic acid kinase family.

The catalysed reaction is 1,6-anhydro-N-acetyl-beta-muramate + ATP + H2O = N-acetyl-D-muramate 6-phosphate + ADP + H(+). The protein operates within amino-sugar metabolism; 1,6-anhydro-N-acetylmuramate degradation. Its pathway is cell wall biogenesis; peptidoglycan recycling. Catalyzes the specific phosphorylation of 1,6-anhydro-N-acetylmuramic acid (anhMurNAc) with the simultaneous cleavage of the 1,6-anhydro ring, generating MurNAc-6-P. Is required for the utilization of anhMurNAc either imported from the medium or derived from its own cell wall murein, and thus plays a role in cell wall recycling. The sequence is that of Anhydro-N-acetylmuramic acid kinase from Burkholderia orbicola (strain MC0-3).